The chain runs to 1417 residues: Cytoadherence-linked asexual protein 3.1 (1417 aa).

Residues 1–24 (MVSFFKTPIFILIIFLYLNEKVIC) form the signal peptide. 4 cysteine pairs are disulfide-bonded: Cys333/Cys361, Cys407/Cys413, Cys517/Cys545, and Cys521/Cys542. A helical transmembrane segment spans residues 1204-1224 (LVNGFMYAFCFFAISQMYAYF). The tract at residues 1383–1417 (TYIDTEKMNEADSADSDDEKDSDTPDDELMISRFH) is disordered. Positions 1394-1411 (DSADSDDEKDSDTPDDEL) are enriched in acidic residues.

In terms of assembly, self-associates. Component of the RhopH complex. RhopH complex is at least composed of CLAG3.1/CLAG3.2, RhopH2 and RhopH3 with a 1:1:1 subunit stoichiometry. CLAG3.1/CLAG3.2 mediates subunit association through independent contacts with RhopH2 and RhopH3, which do not directly interact with one another. Interacts with RhopH2. Interacts with RhopH3.

It localises to the host cell membrane. The protein localises to the host cytoplasm. It is found in the cytoplasmic vesicle. The protein resides in the secretory vesicle. Its subcellular location is the rhoptry. Functionally, participates in the formation of new permeability pathways in Plasmodium-infected erythrocytes enabling the uptake of nutrients from the blood plasma. The protein is Cytoadherence-linked asexual protein 3.1 of Plasmodium falciparum (isolate 3D7).